A 169-amino-acid chain; its full sequence is Ribosome-binding factor A (169 aa).

A disordered region spans residues 124–169 (AGAKHAGDADPYKSDIPEDVEIDEDDFDEEDEDLIDDEELDEDGNK). Residues 128-139 (HAGDADPYKSDI) are compositionally biased toward basic and acidic residues. Positions 140–169 (PEDVEIDEDDFDEEDEDLIDDEELDEDGNK) are enriched in acidic residues.

It belongs to the RbfA family. As to quaternary structure, monomer. Binds 30S ribosomal subunits, but not 50S ribosomal subunits or 70S ribosomes.

The protein resides in the cytoplasm. Its function is as follows. One of several proteins that assist in the late maturation steps of the functional core of the 30S ribosomal subunit. Associates with free 30S ribosomal subunits (but not with 30S subunits that are part of 70S ribosomes or polysomes). Required for efficient processing of 16S rRNA. May interact with the 5'-terminal helix region of 16S rRNA. This is Ribosome-binding factor A from Arthrobacter sp. (strain FB24).